The following is a 313-amino-acid chain: NAD-capped RNA hydrolase NudC (313 aa).

R111 is a binding site for substrate. A Nudix hydrolase domain is found at 168–293 (PRIDPAVICL…DWSSASESKL (126 aa)). Residues A202, E218, and E222 each contribute to the a divalent metal cation site. A Nudix box motif is present at residues 203–224 (GFVEAGESFEVCVAREIREEIG). Position 236–243 (236–243 (QQWPFPRS)) interacts with substrate. E264 contacts a divalent metal cation.

This sequence belongs to the Nudix hydrolase family. NudC subfamily. As to quaternary structure, homodimer. Requires Mg(2+) as cofactor. Mn(2+) is required as a cofactor.

It catalyses the reaction a 5'-end NAD(+)-phospho-ribonucleoside in mRNA + H2O = a 5'-end phospho-adenosine-phospho-ribonucleoside in mRNA + beta-nicotinamide D-ribonucleotide + 2 H(+). The catalysed reaction is NAD(+) + H2O = beta-nicotinamide D-ribonucleotide + AMP + 2 H(+). It carries out the reaction NADH + H2O = reduced beta-nicotinamide D-ribonucleotide + AMP + 2 H(+). Functionally, mRNA decapping enzyme that specifically removes the nicotinamide adenine dinucleotide (NAD) cap from a subset of mRNAs by hydrolyzing the diphosphate linkage to produce nicotinamide mononucleotide (NMN) and 5' monophosphate mRNA. The NAD-cap is present at the 5'-end of some mRNAs and stabilizes RNA against 5'-processing. Has preference for mRNAs with a 5'-end purine. Catalyzes the hydrolysis of a broad range of dinucleotide pyrophosphates. This Mycobacterium tuberculosis (strain ATCC 25177 / H37Ra) protein is NAD-capped RNA hydrolase NudC.